We begin with the raw amino-acid sequence, 308 residues long: Phenylcoumaran benzylic ether reductase 1 (308 aa).

Residues 11–17 (GGTGYIG), Arg-36, and Arg-45 each bind NADP(+). Catalysis depends on Lys-133, which acts as the Proton acceptor. Arg-137 contacts NADP(+).

It belongs to the NmrA-type oxidoreductase family. Isoflavone reductase subfamily. In terms of tissue distribution, expressed in apical meristem and cotyledon veins of young seedlings. Expressed in vascular tissues of roots, leaves, stems and petals. Expressed in pollen grains. Expressed at low levels in cauline leaves and siliques.

It carries out the reaction (-)-dehydrodiconiferyl alcohol + NADPH + H(+) = (S)-isodihydrodehydrodiconiferyl alcohol + NADP(+). The catalysed reaction is (+)-dehydrodiconiferyl alcohol + NADPH + H(+) = (R)-isodihydrodehydrodiconiferyl alcohol + NADP(+). It catalyses the reaction (2R,3S)-dihydrodehydrodiconiferyl alcohol + NADPH + H(+) = (S)-tetrahydrodehydrodiconiferyl alcohol + NADP(+). The enzyme catalyses (2S,3R)-dihydrodehydrodiconiferyl alcohol + NADPH + H(+) = (R)-tetrahydrodehydrodiconiferyl alcohol + NADP(+). Functionally, oxidoreductase involved in lignan biosynthesis. Catalyzes the NADPH-dependent reduction of phenylcoumaran benzylic ethers. Converts dehydrodiconiferyl alcohol (DDC) to isodihydrodehydrodiconiferyl alcohol (IDDDC), and dihydrodehydrodiconiferyl alcohol (DDDC) to tetrahydrodehydrodiconiferyl alcohol (TDDC). Plays an important role in the biosynthesis of secondary metabolites. In addition to the 8-5'-linked neolignan DDC, can reduce the 8-8'-linked lignans, pinoresinol, and lariciresinol, but with lower activities. The chain is Phenylcoumaran benzylic ether reductase 1 from Arabidopsis thaliana (Mouse-ear cress).